A 341-amino-acid chain; its full sequence is UDP-3-O-acylglucosamine N-acyltransferase (341 aa).

Catalysis depends on H239, which acts as the Proton acceptor.

The protein belongs to the transferase hexapeptide repeat family. LpxD subfamily. As to quaternary structure, homotrimer.

It catalyses the reaction a UDP-3-O-[(3R)-3-hydroxyacyl]-alpha-D-glucosamine + a (3R)-hydroxyacyl-[ACP] = a UDP-2-N,3-O-bis[(3R)-3-hydroxyacyl]-alpha-D-glucosamine + holo-[ACP] + H(+). It participates in bacterial outer membrane biogenesis; LPS lipid A biosynthesis. In terms of biological role, catalyzes the N-acylation of UDP-3-O-acylglucosamine using 3-hydroxyacyl-ACP as the acyl donor. Is involved in the biosynthesis of lipid A, a phosphorylated glycolipid that anchors the lipopolysaccharide to the outer membrane of the cell. The polypeptide is UDP-3-O-acylglucosamine N-acyltransferase (Idiomarina loihiensis (strain ATCC BAA-735 / DSM 15497 / L2-TR)).